A 97-amino-acid polypeptide reads, in one-letter code: UPF0390 protein CNBD1430 (97 aa).

Disordered regions lie at residues 1–57 and 75–97; these read MAQG…INNS and RNVG…GKSR. The segment covering 29 to 46 has biased composition (basic and acidic residues); the sequence is GKREVAPKDRQRVLERSQ. Polar residues predominate over residues 48-57; sequence KQLSSKINNS.

Belongs to the UPF0390 family.

The protein is UPF0390 protein CNBD1430 of Cryptococcus neoformans var. neoformans serotype D (strain B-3501A) (Filobasidiella neoformans).